The following is a 348-amino-acid chain: 3-isopropylmalate dehydrogenase (348 aa).

76–87 provides a ligand contact to NAD(+); that stretch reads GPKWTDPNNRPE. Substrate is bound by residues arginine 94, arginine 104, arginine 132, and aspartate 217. Mg(2+) contacts are provided by aspartate 217, aspartate 241, and aspartate 245. 275–287 contributes to the NAD(+) binding site; that stretch reads GSAPDIAGKNVAN.

Belongs to the isocitrate and isopropylmalate dehydrogenases family. LeuB type 1 subfamily. In terms of assembly, homodimer. It depends on Mg(2+) as a cofactor. Requires Mn(2+) as cofactor.

It is found in the cytoplasm. The enzyme catalyses (2R,3S)-3-isopropylmalate + NAD(+) = 4-methyl-2-oxopentanoate + CO2 + NADH. The protein operates within amino-acid biosynthesis; L-leucine biosynthesis; L-leucine from 3-methyl-2-oxobutanoate: step 3/4. Its function is as follows. Catalyzes the oxidation of 3-carboxy-2-hydroxy-4-methylpentanoate (3-isopropylmalate) to 3-carboxy-4-methyl-2-oxopentanoate. The product decarboxylates to 4-methyl-2 oxopentanoate. In Staphylococcus aureus (strain MRSA252), this protein is 3-isopropylmalate dehydrogenase.